A 128-amino-acid polypeptide reads, in one-letter code: Gastrotropin (128 aa).

Ala-2 carries the post-translational modification N-acetylalanine.

The protein belongs to the calycin superfamily. Fatty-acid binding protein (FABP) family. As to expression, found exclusively in the ileum and to a lesser extent in distal jejunum.

Its subcellular location is the cytoplasm. It is found in the membrane. In terms of biological role, binds to bile acids and is involved in enterohepatic bile acid metabolism. Required for efficient apical to basolateral transport of conjugated bile acids in ileal enterocytes. Stimulates gastric acid and pepsinogen secretion. In Sus scrofa (Pig), this protein is Gastrotropin (FABP6).